The primary structure comprises 119 residues: Small ribosomal subunit protein uS13 (119 aa).

The interval 92-119 (RRGLPVRGQQTQTNARTRKGPRRGPASR) is disordered.

It belongs to the universal ribosomal protein uS13 family. As to quaternary structure, part of the 30S ribosomal subunit. Forms a loose heterodimer with protein S19. Forms two bridges to the 50S subunit in the 70S ribosome.

In terms of biological role, located at the top of the head of the 30S subunit, it contacts several helices of the 16S rRNA. In the 70S ribosome it contacts the 23S rRNA (bridge B1a) and protein L5 of the 50S subunit (bridge B1b), connecting the 2 subunits; these bridges are implicated in subunit movement. Contacts the tRNAs in the A and P-sites. This is Small ribosomal subunit protein uS13 from Halorhodospira halophila (strain DSM 244 / SL1) (Ectothiorhodospira halophila (strain DSM 244 / SL1)).